Reading from the N-terminus, the 388-residue chain is MNKQIFVLYFNIFLIFLGIGLVIPVLPVYLKDLGLTGSDLGLLVAAFALSQMIISPFGGTLADKLGKKLIICIGLILFSVSEFMFAVGHNFSVLMLSRVIGGMSAGMVMPGVTGLIADISPSHQKAKNFGYMSAIINSGFILGPGIGGFMAEVSHRMPFYFAGALGILAFIMSIVLIHDPKKSTTSGFQKLEPQLLTKINWKVFITPVILTLVLSLGLSAFETLYSLYTADKVNYSPKDISIAITGGGIFGALFQIYFFDKFMKYFSELTFIAWSLLYSVVVLILLVFANGYWSIMLISFVVFIGFDMIRPAITNYFSNIAGERQGFAGGLNSTFTSMGNFIGPLIAGALFDVHIEAPIYMAIGVSLAGVVIVLIEKQHRAKLKEQNM.

12 helical membrane passes run 5–25 (IFVLYFNIFLIFLGIGLVIPV), 42–62 (LLVAAFALSQMIISPFGGTLA), 69–89 (LIICIGLILFSVSEFMFAVGH), 99–119 (VIGGMSAGMVMPGVTGLIADI), 129–149 (FGYMSAIINSGFILGPGIGGF), 157–177 (MPFYFAGALGILAFIMSIVLI), 201–221 (WKVFITPVILTLVLSLGLSAF), 239–259 (DISIAITGGGIFGALFQIYFF), 269–289 (LTFIAWSLLYSVVVLILLVFA), 293–313 (WSIMLISFVVFIGFDMIRPAI), 331–351 (LNSTFTSMGNFIGPLIAGALF), and 355–375 (IEAPIYMAIGVSLAGVVIVLI).

This sequence belongs to the major facilitator superfamily. TCR/Tet family.

The protein localises to the cell membrane. Its function is as follows. Involved in quinolone resistance. May constitute a membrane-associated active efflux pump of hydrophilic quinolones. The protein is Quinolone resistance protein NorA (norA) of Staphylococcus aureus (strain MSSA476).